Consider the following 238-residue polypeptide: Probable transglycosylase SceD 3 (238 aa).

Positions 1 to 27 are cleaved as a signal peptide; it reads MKKTVVASTLAVGLGVTGFAAGNSADA. The disordered stretch occupies residues 82 to 161; sequence YGQGSTNAPA…SEASEGSSVN (80 aa). Low complexity predominate over residues 89–156; the sequence is APAQETAEQP…NESSSSEASE (68 aa).

This sequence belongs to the transglycosylase family. SceD subfamily.

The protein localises to the secreted. Functionally, is able to cleave peptidoglycan and affects clumping and separation of bacterial cells. The chain is Probable transglycosylase SceD 3 (sceD3) from Staphylococcus saprophyticus subsp. saprophyticus (strain ATCC 15305 / DSM 20229 / NCIMB 8711 / NCTC 7292 / S-41).